The primary structure comprises 693 residues: Elongation factor G (693 aa).

Positions 8–283 (NRCRNIGIMA…AVVDYLPSPL (276 aa)) constitute a tr-type G domain. GTP-binding positions include 17–24 (AHIDAGKT), 81–85 (DTPGH), and 135–138 (NKMD).

It belongs to the TRAFAC class translation factor GTPase superfamily. Classic translation factor GTPase family. EF-G/EF-2 subfamily.

It localises to the cytoplasm. Functionally, catalyzes the GTP-dependent ribosomal translocation step during translation elongation. During this step, the ribosome changes from the pre-translocational (PRE) to the post-translocational (POST) state as the newly formed A-site-bound peptidyl-tRNA and P-site-bound deacylated tRNA move to the P and E sites, respectively. Catalyzes the coordinated movement of the two tRNA molecules, the mRNA and conformational changes in the ribosome. The sequence is that of Elongation factor G from Acidobacterium capsulatum (strain ATCC 51196 / DSM 11244 / BCRC 80197 / JCM 7670 / NBRC 15755 / NCIMB 13165 / 161).